Reading from the N-terminus, the 80-residue chain is Pancreatic polypeptide (80 aa).

Positions 1–25 are cleaved as a signal peptide; the sequence is MPPRWASLLLLACSLLLLAVPPGTA. Tyr-61 is modified (tyrosine amide). Positions 65–80 are excised as a propeptide; the sequence is SSSRVLCEEPMGAAGC.

The protein belongs to the NPY family.

Its subcellular location is the secreted. In terms of biological role, hormone secreted by pancreatic cells that acts as a regulator of pancreatic and gastrointestinal functions. The polypeptide is Pancreatic polypeptide (PPY) (Gallus gallus (Chicken)).